The primary structure comprises 392 residues: Zinc finger protein ham-2 (392 aa).

2 consecutive C2H2-type zinc fingers follow at residues 16-39 (FPCS…MQAH) and 43-66 (YTCT…YRVH). The segment at 72–95 (FMCRCCNWAFPDKTSLHIHMQSML) adopts a C2H2-type 3; degenerate zinc-finger fold. Disordered stretches follow at residues 106-130 (LAKS…PFSP) and 278-303 (HISH…HSGE). Residues 112-123 (VVDSTSESGSPR) are compositionally biased toward polar residues. Over residues 289 to 303 (SDSHISGGSSSHSGE) the composition is skewed to low complexity.

The protein resides in the nucleus. Probable transcription factor that acts downstream of egl-15, to promote migration of the HSN motor neurons from the tail to the gonad primordium during HSN cell differentiation. The chain is Zinc finger protein ham-2 from Caenorhabditis elegans.